The chain runs to 164 residues: ATP synthase subunit b 1 (164 aa).

A helical membrane pass occupies residues 4-24; sequence MELAELWVAVAFFVFVGILLY.

It belongs to the ATPase B chain family. As to quaternary structure, F-type ATPases have 2 components, F(1) - the catalytic core - and F(0) - the membrane proton channel. F(1) has five subunits: alpha(3), beta(3), gamma(1), delta(1), epsilon(1). F(0) has three main subunits: a(1), b(2) and c(10-14). The alpha and beta chains form an alternating ring which encloses part of the gamma chain. F(1) is attached to F(0) by a central stalk formed by the gamma and epsilon chains, while a peripheral stalk is formed by the delta and b chains.

It localises to the cell inner membrane. In terms of biological role, f(1)F(0) ATP synthase produces ATP from ADP in the presence of a proton or sodium gradient. F-type ATPases consist of two structural domains, F(1) containing the extramembraneous catalytic core and F(0) containing the membrane proton channel, linked together by a central stalk and a peripheral stalk. During catalysis, ATP synthesis in the catalytic domain of F(1) is coupled via a rotary mechanism of the central stalk subunits to proton translocation. Its function is as follows. Component of the F(0) channel, it forms part of the peripheral stalk, linking F(1) to F(0). This chain is ATP synthase subunit b 1, found in Azorhizobium caulinodans (strain ATCC 43989 / DSM 5975 / JCM 20966 / LMG 6465 / NBRC 14845 / NCIMB 13405 / ORS 571).